The following is a 249-amino-acid chain: Type III pantothenate kinase (249 aa).

Residue 6–13 (DIGNSRTK) participates in ATP binding. Substrate-binding positions include Tyr89 and 96 to 99 (GIDR). The Proton acceptor role is filled by Asp98. K(+) is bound at residue Asp119. Position 122 (Thr122) interacts with ATP. Thr174 is a binding site for substrate.

The protein belongs to the type III pantothenate kinase family. In terms of assembly, homodimer. The cofactor is NH4(+). It depends on K(+) as a cofactor.

Its subcellular location is the cytoplasm. The enzyme catalyses (R)-pantothenate + ATP = (R)-4'-phosphopantothenate + ADP + H(+). Its pathway is cofactor biosynthesis; coenzyme A biosynthesis; CoA from (R)-pantothenate: step 1/5. Catalyzes the phosphorylation of pantothenate (Pan), the first step in CoA biosynthesis. The protein is Type III pantothenate kinase of Colwellia psychrerythraea (strain 34H / ATCC BAA-681) (Vibrio psychroerythus).